The chain runs to 168 residues: Lipoprotein signal peptidase (168 aa).

The next 3 membrane-spanning stretches (helical) occupy residues Thr-8–Leu-28, Lys-70–Phe-90, and Val-104–Val-124. Active-site residues include Asp-125 and Asp-143. A helical transmembrane segment spans residues Trp-134–Val-154.

The protein belongs to the peptidase A8 family.

The protein localises to the cell inner membrane. The enzyme catalyses Release of signal peptides from bacterial membrane prolipoproteins. Hydrolyzes -Xaa-Yaa-Zaa-|-(S,diacylglyceryl)Cys-, in which Xaa is hydrophobic (preferably Leu), and Yaa (Ala or Ser) and Zaa (Gly or Ala) have small, neutral side chains.. The protein operates within protein modification; lipoprotein biosynthesis (signal peptide cleavage). This protein specifically catalyzes the removal of signal peptides from prolipoproteins. In Chlamydia pneumoniae (Chlamydophila pneumoniae), this protein is Lipoprotein signal peptidase.